Reading from the N-terminus, the 216-residue chain is Peptide methionine sulfoxide reductase MsrA (216 aa).

Cys-54 is an active-site residue.

This sequence belongs to the MsrA Met sulfoxide reductase family.

The catalysed reaction is L-methionyl-[protein] + [thioredoxin]-disulfide + H2O = L-methionyl-(S)-S-oxide-[protein] + [thioredoxin]-dithiol. It catalyses the reaction [thioredoxin]-disulfide + L-methionine + H2O = L-methionine (S)-S-oxide + [thioredoxin]-dithiol. Has an important function as a repair enzyme for proteins that have been inactivated by oxidation. Catalyzes the reversible oxidation-reduction of methionine sulfoxide in proteins to methionine. The sequence is that of Peptide methionine sulfoxide reductase MsrA from Xanthomonas campestris pv. campestris (strain ATCC 33913 / DSM 3586 / NCPPB 528 / LMG 568 / P 25).